A 124-amino-acid chain; its full sequence is Small ribosomal subunit protein uS13 (124 aa).

The tract at residues 95 to 124 (GLPVRGQRTHTNARTRKGPRRSVMGKRKKA) is disordered.

The protein belongs to the universal ribosomal protein uS13 family. As to quaternary structure, part of the 30S ribosomal subunit. Forms a loose heterodimer with protein S19. Forms two bridges to the 50S subunit in the 70S ribosome.

In terms of biological role, located at the top of the head of the 30S subunit, it contacts several helices of the 16S rRNA. In the 70S ribosome it contacts the 23S rRNA (bridge B1a) and protein L5 of the 50S subunit (bridge B1b), connecting the 2 subunits; these bridges are implicated in subunit movement. Contacts the tRNAs in the A and P-sites. This Syntrophobacter fumaroxidans (strain DSM 10017 / MPOB) protein is Small ribosomal subunit protein uS13.